The sequence spans 867 residues: Cation/H(+) antiporter 23, chloroplastic (867 aa).

The next 12 membrane-spanning stretches (helical) occupy residues 43 to 63 (SGSTLASSLPFFITQLFVANL), 75 to 95 (LYLPPFVAQILCGLLFSPSVL), 112 to 132 (MVLETFANLALVYNIFLLGLG), 146 to 166 (VIIAFTGLLVALPVGAFLYYL), 175 to 195 (IISGCVFWSVALACTNFPDLA), 212 to 232 (AMCAAIVTDLCTWVLLVFGFA), 242 to 262 (KMMPFVIITTAIFVLLCIFVI), 283 to 303 (HVWFILGGVVLCGLITDACGV), 336 to 356 (GILMPLFYIICGLRADIGFML), 362 to 382 (FMMVVVICSSFLVKIVTTVIT), 393 to 413 (AFAIGALMNTKGTLSLVVLNA), and 427 to 447 (HMTIALLVMSLVVEPLLAFAY). The disordered stretch occupies residues 848-867 (SMYEDEDEDDEEDHQYGIHR). The segment covering 851–860 (EDEDEDDEED) has biased composition (acidic residues).

It belongs to the monovalent cation:proton antiporter 2 (CPA2) transporter (TC 2.A.37) family. CHX (TC 2.A.37.4) subfamily. In terms of tissue distribution, specifically expressed in flower buds and pollen. Expressed in leaves, roots and stems.

It is found in the plastid. Its subcellular location is the chloroplast membrane. The protein resides in the endoplasmic reticulum membrane. Its function is as follows. Operates as a K(+)/H(+) antiporter or Na(+)/H(+) antiporter of the chloroplast envelope that functions in pH homeostasis and chloroplast development. Monovalent cation transporter with a preference for Cs(+), K(+) and Rb(+) relative to Na(+) or Li(+). Required for pollen tube guidance, but not for normal pollen development. May also be involved in the development or function of the female gametophyte. In Arabidopsis thaliana (Mouse-ear cress), this protein is Cation/H(+) antiporter 23, chloroplastic (CHX23).